Consider the following 617-residue polypeptide: RNA polymerase sigma factor RpoD (617 aa).

The disordered stretch occupies residues 192 to 222 (NITNDSNENEDENEDENEDEDENSIDPELAN). Acidic residues predominate over residues 198-216 (NENEDENEDENEDEDENSI). The sigma-70 factor domain-2 stretch occupies residues 383–453 (MVEANLRLVI…TRSIADQART (71 aa)). An Interaction with polymerase core subunit RpoC motif is present at residues 407–410 (DLIQ). Positions 462–538 (ETINKLNRIS…DTTLELPLDS (77 aa)) are sigma-70 factor domain-3. Residues 551-604 (VLSGLTAREAKVLRMRFGIDMNTDHTLEEVGKQFDVTRERIRQIEAKALRKLRH) form a sigma-70 factor domain-4 region. Residues 577 to 596 (LEEVGKQFDVTRERIRQIEA) constitute a DNA-binding region (H-T-H motif).

This sequence belongs to the sigma-70 factor family. RpoD/SigA subfamily. In terms of assembly, interacts transiently with the RNA polymerase catalytic core.

It localises to the cytoplasm. Functionally, sigma factors are initiation factors that promote the attachment of RNA polymerase to specific initiation sites and are then released. This sigma factor is the primary sigma factor during exponential growth. The chain is RNA polymerase sigma factor RpoD from Buchnera aphidicola subsp. Schizaphis graminum (strain Sg).